The sequence spans 235 residues: Biosynthetic peptidoglycan transglycosylase (235 aa).

A helical membrane pass occupies residues 12-34 (GLGKLLLAALLSTIVSVALLRFI).

Belongs to the glycosyltransferase 51 family.

The protein localises to the cell inner membrane. The enzyme catalyses [GlcNAc-(1-&gt;4)-Mur2Ac(oyl-L-Ala-gamma-D-Glu-L-Lys-D-Ala-D-Ala)](n)-di-trans,octa-cis-undecaprenyl diphosphate + beta-D-GlcNAc-(1-&gt;4)-Mur2Ac(oyl-L-Ala-gamma-D-Glu-L-Lys-D-Ala-D-Ala)-di-trans,octa-cis-undecaprenyl diphosphate = [GlcNAc-(1-&gt;4)-Mur2Ac(oyl-L-Ala-gamma-D-Glu-L-Lys-D-Ala-D-Ala)](n+1)-di-trans,octa-cis-undecaprenyl diphosphate + di-trans,octa-cis-undecaprenyl diphosphate + H(+). Its pathway is cell wall biogenesis; peptidoglycan biosynthesis. Peptidoglycan polymerase that catalyzes glycan chain elongation from lipid-linked precursors. The sequence is that of Biosynthetic peptidoglycan transglycosylase from Aeromonas hydrophila subsp. hydrophila (strain ATCC 7966 / DSM 30187 / BCRC 13018 / CCUG 14551 / JCM 1027 / KCTC 2358 / NCIMB 9240 / NCTC 8049).